The chain runs to 508 residues: Photosystem II CP47 reaction center protein (508 aa).

The next 6 helical transmembrane spans lie at 21–36 (SVHI…WAGS), 101–115 (IVFS…IWHW), 140–156 (GIHL…FGAF), 203–218 (IAAG…FHLS), 237–252 (VLSS…AFVV), and 457–472 (SFAL…HGAR).

It belongs to the PsbB/PsbC family. PsbB subfamily. PSII is composed of 1 copy each of membrane proteins PsbA, PsbB, PsbC, PsbD, PsbE, PsbF, PsbH, PsbI, PsbJ, PsbK, PsbL, PsbM, PsbT, PsbX, PsbY, PsbZ, Psb30/Ycf12, at least 3 peripheral proteins of the oxygen-evolving complex and a large number of cofactors. It forms dimeric complexes. The cofactor is Binds multiple chlorophylls. PSII binds additional chlorophylls, carotenoids and specific lipids..

The protein localises to the plastid. The protein resides in the chloroplast thylakoid membrane. One of the components of the core complex of photosystem II (PSII). It binds chlorophyll and helps catalyze the primary light-induced photochemical processes of PSII. PSII is a light-driven water:plastoquinone oxidoreductase, using light energy to abstract electrons from H(2)O, generating O(2) and a proton gradient subsequently used for ATP formation. This chain is Photosystem II CP47 reaction center protein, found in Manihot esculenta (Cassava).